The following is a 751-amino-acid chain: Cellulose synthase-like protein G3 (751 aa).

2 consecutive transmembrane segments (helical) span residues 47-67 (IYAV…VHSL) and 72-92 (TTLI…MWAT). Catalysis depends on residues Asp161 and Asp466. The next 6 membrane-spanning stretches (helical) occupy residues 543-563 (CWAF…LALL), 577-597 (FWLY…DFVL), 617-639 (FSSH…THGF), 674-694 (TVAI…FAWG), 697-717 (LVLE…IYEA), and 731-751 (VCFV…VFLK).

Belongs to the glycosyltransferase 2 family. Plant cellulose synthase-like G subfamily.

The protein resides in the golgi apparatus membrane. In terms of biological role, thought to be a Golgi-localized beta-glycan synthase that polymerize the backbones of noncellulosic polysaccharides (hemicelluloses) of plant cell wall. In Arabidopsis thaliana (Mouse-ear cress), this protein is Cellulose synthase-like protein G3 (CSLG3).